A 211-amino-acid chain; its full sequence is Transcription antitermination protein NusB (211 aa).

The interval 152-211 is disordered; the sequence is PAKKERVANPFPSTPPKKPENVPNPFSTPFKKNSSEPIRNPFEGNKSPQPPQKTLRRKKK. The segment covering 175 to 188 has biased composition (polar residues); that stretch reads NPFSTPFKKNSSEP.

The protein belongs to the NusB family.

In terms of biological role, involved in transcription antitermination. Required for transcription of ribosomal RNA (rRNA) genes. Binds specifically to the boxA antiterminator sequence of the ribosomal RNA (rrn) operons. This chain is Transcription antitermination protein NusB, found in Chloroherpeton thalassium (strain ATCC 35110 / GB-78).